The sequence spans 104 residues: Large ribosomal subunit protein uL24 (104 aa).

The protein belongs to the universal ribosomal protein uL24 family. As to quaternary structure, part of the 50S ribosomal subunit.

Its function is as follows. One of two assembly initiator proteins, it binds directly to the 5'-end of the 23S rRNA, where it nucleates assembly of the 50S subunit. One of the proteins that surrounds the polypeptide exit tunnel on the outside of the subunit. The chain is Large ribosomal subunit protein uL24 from Aliivibrio fischeri (strain ATCC 700601 / ES114) (Vibrio fischeri).